The sequence spans 261 residues: Ribonuclease PH (261 aa).

Residues Arg86 and 124-126 each bind phosphate; that span reads GTR.

Belongs to the RNase PH family. In terms of assembly, homohexameric ring arranged as a trimer of dimers.

The catalysed reaction is tRNA(n+1) + phosphate = tRNA(n) + a ribonucleoside 5'-diphosphate. In terms of biological role, phosphorolytic 3'-5' exoribonuclease that plays an important role in tRNA 3'-end maturation. Removes nucleotide residues following the 3'-CCA terminus of tRNAs; can also add nucleotides to the ends of RNA molecules by using nucleoside diphosphates as substrates, but this may not be physiologically important. Probably plays a role in initiation of 16S rRNA degradation (leading to ribosome degradation) during starvation. This is Ribonuclease PH from Persephonella marina (strain DSM 14350 / EX-H1).